The following is a 534-amino-acid chain: Ulvan lyase NLR42 (534 aa).

An N-terminal signal peptide occupies residues 1 to 47 (MVFFKDLFIFKSLIKGSLYSGHMKKKLLNYLPLFALMLFTVSMMAQT). Cysteine 59 and cysteine 89 form a disulfide bridge. Ca(2+)-binding residues include glycine 63, asparagine 68, aspartate 86, threonine 88, alanine 91, and aspartate 92. Residue tyrosine 164 coordinates substrate. Lysine 169 functions as the Proton acceptor in the catalytic mechanism. Substrate contacts are provided by residues 218–223 (SGAAGR) and 288–291 (YRVK). Catalysis depends on tyrosine 288, which acts as the Proton donor/acceptor. Residues 316-449 (PAADIYRIKN…SKWNLESTTL (134 aa)) form a ulvan-binding domain region. The propeptide at 450–534 (SVDSQQIASV…KVYQTKLIVN (85 aa)) is removed by the type IX secretion system (T9SS).

The protein belongs to the polysaccharide lyase 28 family. It depends on Ca(2+) as a cofactor.

The protein resides in the secreted. Functionally, ulvan lyase involved in ulvan degradation. Ulvan is the main polysaccharide component of the Ulvales (green seaweed) cell wall. It is composed of disaccharide building blocks comprising 3-sulfated rhamnose (Rha3S) linked to D-glucuronic acid (GlcA), L-iduronic acid (IduA), or D-xylose (Xyl). Ulvan lyase catalyzes the endolytic cleavage of the glycosidic bond between Rha3S and the uronic acids GlcA or IduA, producing oligosaccharides that have unsaturated 4-deoxy-L-threo-hex-4-enopyranosiduronic acid (deltaUA) at the non-reducing end. This results eventually in the degradation of the ulvan polysaccharide into deltaUA-Rha3S disaccharides and deltaUA-Rha3S-Xyl-Rha3S tetrasaccharides. The chain is Ulvan lyase NLR42 from Nonlabens ulvanivorans (Persicivirga ulvanivorans).